The sequence spans 899 residues: Solute carrier family 12 member 9 (899 aa).

Residues 1 to 44 (MTSESSPLLHYRLFSVSDGGLGPPDSSPIMTDAVTVGTGPTQRK) are Cytoplasmic-facing. Residues 45 to 65 (LSTFFGVVVPTVLSMFSIVVF) form a helical membrane-spanning segment. Residues 66-80 (MRIGFVVGHAGLLQS) lie on the Extracellular side of the membrane. A helical transmembrane segment spans residues 81 to 101 (LLMLFVAYVIIWLTVLSVCAI). Over 102–127 (STNGAVQGGGAYFMISRTLGPEFGGS) the chain is Cytoplasmic. The chain crosses the membrane as a helical span at residues 128–148 (IGLMFYLANVFACGVYVLGLV). At 149-176 (EAVLDVFGRDPSDVTDSLRSLPQGYGYS) the chain is on the extracellular side. Residues 177–197 (FLYASIILLLCMAICLVGASI) form a helical membrane-spanning segment. At 198 to 202 (YSQAS) the chain is on the cytoplasmic side. Residues 203-223 (FFIFLLVFVVLLTILISFLAV) traverse the membrane as a helical segment. Residues 224–266 (RPLTVSIRHGGNVTMTGVYTGINSSTLHNNLQADYSLDYTTGN) are Extracellular-facing. N-linked (GlcNAc...) asparagine glycosylation is found at Asn-235 and Asn-246. Residues 267–287 (LMNFATVFAVMFNGCTGIMAG) traverse the membrane as a helical segment. The Cytoplasmic portion of the chain corresponds to 288–304 (CNLSGELKQPSRSIPMG). Residues 305–325 (TIIAVIITFFVYLILFIFTAF) traverse the membrane as a helical segment. Residues 326-347 (TCDRTLLREDYGFFRSINIWPP) lie on the Extracellular side of the membrane. Residues 348–368 (FVLIGVYATSLSASMSTLIGA) traverse the membrane as a helical segment. The Cytoplasmic portion of the chain corresponds to 369–393 (SRILHALAKDDLFGVLLAPAKLVSK). The helical transmembrane segment at 394–414 (GGNPWGAVVYTWALVQLVLLA) threads the bilayer. Residues 415–419 (GKLNT) lie on the Extracellular side of the membrane. A helical membrane pass occupies residues 420–440 (IAGIVTVFYLIAYAAIDLACL). The Cytoplasmic portion of the chain corresponds to 441-469 (ALEWASAPNFRPTFRFFSWHTCLLGILSS). Residues 470–490 (LVMMFLINPAYASGSIVLLLL) traverse the membrane as a helical segment. Over 491 to 739 (LLGSIHFRSS…PLDLLRPQAS (249 aa)) the chain is Extracellular. The helical transmembrane segment at 740–760 (AYVDVCSLFLLQMACILNMAA) threads the bilayer. Topologically, residues 761–899 (SWRRYQLRVF…GLTPVTCTEL (139 aa)) are cytoplasmic.

This sequence belongs to the SLC12A transporter family.

The protein resides in the cell membrane. It localises to the lysosome membrane. Seems to correspond to a subunit of a multimeric transport system and thus, additional subunits may be required for its function. May play a role in lysosomal ion flux and osmoregulation. The polypeptide is Solute carrier family 12 member 9 (slc12a9) (Xenopus laevis (African clawed frog)).